We begin with the raw amino-acid sequence, 697 residues long: Elongation factor G (697 aa).

Positions 8–283 (EHIRNIGICA…AVVDFLPSPT (276 aa)) constitute a tr-type G domain. Residues 17 to 24 (AHIDAGKT), 81 to 85 (DTPGH), and 135 to 138 (NKMD) contribute to the GTP site.

It belongs to the TRAFAC class translation factor GTPase superfamily. Classic translation factor GTPase family. EF-G/EF-2 subfamily.

It localises to the cytoplasm. Catalyzes the GTP-dependent ribosomal translocation step during translation elongation. During this step, the ribosome changes from the pre-translocational (PRE) to the post-translocational (POST) state as the newly formed A-site-bound peptidyl-tRNA and P-site-bound deacylated tRNA move to the P and E sites, respectively. Catalyzes the coordinated movement of the two tRNA molecules, the mRNA and conformational changes in the ribosome. The polypeptide is Elongation factor G (Rickettsia massiliae (strain Mtu5)).